The primary structure comprises 768 residues: Solabiose phosphorylase (768 aa).

Catalysis depends on Asp456, which acts as the Proton donor.

The protein belongs to the glycosyl hydrolase 94 family.

It catalyses the reaction solabiose + phosphate = D-galactose + alpha-D-glucose 1-phosphate. Functionally, catalyzes the reversible phosphorolysis of solabiose. Catalyzes the phosphorolysis and synthesis of solabiose through a sequential bi-bi mechanism involving the formation of a ternary complex. Is probably involved in the metabolism of solabiose released from solabiose-containing compounds. This is Solabiose phosphorylase from Paenibacillus borealis.